We begin with the raw amino-acid sequence, 587 residues long: Putative adhesin (587 aa).

Positions 1 to 19 are cleaved as a signal peptide; that stretch reads MKFAISTLLIILQAAAVFA. Cys211 and Cys261 are oxidised to a cystine. Asn239 is a glycosylation site (N-linked (GlcNAc...) asparagine). Repeat copies occupy residues 432-455, 466-489, 491-512, and 513-531. A 4 X 24 AA approximate tandem repeats, Thr-rich region spans residues 432–531; that stretch reads IVTVITKEGG…EGGEKVTTTY (100 aa). Residue Ser562 is the site of GPI-anchor amidated serine attachment. A propeptide spans 563-587 (removed in mature form); sequence EAQVNLGSKSAVGLLAIVPMLFLAI.

The GPI-anchor is attached to the protein in the endoplasmic reticulum and serves to target the protein to the cell surface. There, the glucosamine-inositol phospholipid moiety is cleaved off and the GPI-modified mannoprotein is covalently attached via its lipidless GPI glycan remnant to the 1,6-beta-glucan of the outer cell wall layer.

It is found in the cell membrane. The protein localises to the secreted. It localises to the cell wall. Functionally, putative adhesion protein. May be involved in cell-cell interaction, interacting with other proteins by salt bridges and hydrogen bonds. The sequence is that of Putative adhesin from Komagataella phaffii (strain ATCC 76273 / CBS 7435 / CECT 11047 / NRRL Y-11430 / Wegner 21-1) (Yeast).